The chain runs to 550 residues: CTP synthase (550 aa).

An amidoligase domain region spans residues 1–265; it reads MTKFIFVTGG…DEIVVEQLGL (265 aa). Serine 13 is a CTP binding site. Serine 13 contacts UTP. 14-19 serves as a coordination point for ATP; the sequence is SLGKGI. L-glutamine is bound at residue tyrosine 54. Aspartate 71 is an ATP binding site. The Mg(2+) site is built by aspartate 71 and glutamate 139. Residues 146 to 148, 186 to 191, and lysine 222 each bind CTP; these read DIE and KTKPTQ. UTP-binding positions include 186-191 and lysine 222; that span reads KTKPTQ. The Glutamine amidotransferase type-1 domain occupies 290–541; that stretch reads TITLVGKYVD…IRAAAEHRRR (252 aa). L-glutamine is bound at residue glycine 351. Catalysis depends on cysteine 378, which acts as the Nucleophile; for glutamine hydrolysis. Residues 379–382, glutamate 402, and arginine 469 contribute to the L-glutamine site; that span reads LGMQ. Catalysis depends on residues histidine 514 and glutamate 516.

This sequence belongs to the CTP synthase family. As to quaternary structure, homotetramer.

The enzyme catalyses UTP + L-glutamine + ATP + H2O = CTP + L-glutamate + ADP + phosphate + 2 H(+). The catalysed reaction is L-glutamine + H2O = L-glutamate + NH4(+). It catalyses the reaction UTP + NH4(+) + ATP = CTP + ADP + phosphate + 2 H(+). It functions in the pathway pyrimidine metabolism; CTP biosynthesis via de novo pathway; CTP from UDP: step 2/2. Its activity is regulated as follows. Allosterically activated by GTP, when glutamine is the substrate; GTP has no effect on the reaction when ammonia is the substrate. The allosteric effector GTP functions by stabilizing the protein conformation that binds the tetrahedral intermediate(s) formed during glutamine hydrolysis. Inhibited by the product CTP, via allosteric rather than competitive inhibition. Its function is as follows. Catalyzes the ATP-dependent amination of UTP to CTP with either L-glutamine or ammonia as the source of nitrogen. Regulates intracellular CTP levels through interactions with the four ribonucleotide triphosphates. In Nitrosococcus oceani (strain ATCC 19707 / BCRC 17464 / JCM 30415 / NCIMB 11848 / C-107), this protein is CTP synthase.